The following is a 207-amino-acid chain: Na(+)-translocating NADH-quinone reductase subunit D (207 aa).

Transmembrane regions (helical) follow at residues isoleucine 20–alanine 40, phenylalanine 41–isoleucine 61, isoleucine 69–leucine 89, valine 102–methionine 122, phenylalanine 130–leucine 150, and asparagine 177–isoleucine 197.

It belongs to the NqrDE/RnfAE family. Composed of six subunits; NqrA, NqrB, NqrC, NqrD, NqrE and NqrF.

The protein localises to the cell inner membrane. The enzyme catalyses a ubiquinone + n Na(+)(in) + NADH + H(+) = a ubiquinol + n Na(+)(out) + NAD(+). In terms of biological role, NQR complex catalyzes the reduction of ubiquinone-1 to ubiquinol by two successive reactions, coupled with the transport of Na(+) ions from the cytoplasm to the periplasm. NqrA to NqrE are probably involved in the second step, the conversion of ubisemiquinone to ubiquinol. In Haemophilus ducreyi (strain 35000HP / ATCC 700724), this protein is Na(+)-translocating NADH-quinone reductase subunit D.